A 109-amino-acid polypeptide reads, in one-letter code: Spermidine export protein MdtI (109 aa).

4 consecutive transmembrane segments (helical) span residues 6–26 (WVHAAWLALAIVLEIVANVFL), 36–56 (IFGLLSQAAVLAAFSALSQAV), 64–84 (AYALWGGFGIAATLAAGWILF), and 88–108 (LNRKGWIGLVLLLAGMIMVKL).

This sequence belongs to the drug/metabolite transporter (DMT) superfamily. Small multidrug resistance (SMR) (TC 2.A.7.1) family. MdtI subfamily. In terms of assembly, forms a complex with MdtJ.

It localises to the cell inner membrane. Functionally, catalyzes the excretion of spermidine. The protein is Spermidine export protein MdtI of Shigella dysenteriae serotype 1 (strain Sd197).